We begin with the raw amino-acid sequence, 495 residues long: Dipeptide and tripeptide permease A (495 aa).

At 1-20 (MTTSALNPLRQPKPFYLIFS) the chain is on the cytoplasmic side. Residues 21–41 (IEFWERFGFYGLQGILAVYLV) form a helical membrane-spanning segment. Topologically, residues 42–51 (KALGLREADS) are periplasmic. The helical transmembrane segment at 52 to 72 (FTLFSSFIALVYGLIAVGGWL) threads the bilayer. Over 73–81 (GDKVLGTKR) the chain is Cytoplasmic. Transmembrane regions (helical) follow at residues 82 to 102 (TILLGALVLTAGYAMVTASSE) and 103 to 123 (HISLLYLGMGTIAVGNGLFKA). The Periplasmic portion of the chain corresponds to 124 to 145 (NPSSLLSKCYEENDPRLDGAFT). A helical membrane pass occupies residues 146–166 (MYYMAINIGSLLSMLATPWLA). The Cytoplasmic portion of the chain corresponds to 167–171 (DQFGY). A helical transmembrane segment spans residues 172–192 (AHAFALSVVGMLITVANFILM). At 193–209 (QGWVKNYGSDADFRTPR) the chain is on the periplasmic side. Residues 210–230 (LSTWLAVLAGVVAACAAAALL) traverse the membrane as a helical segment. The Cytoplasmic portion of the chain corresponds to 231-232 (LK). A helical transmembrane segment spans residues 233–253 (HEIIANVVLAVLSIGVVGLYV). The Periplasmic portion of the chain corresponds to 254–266 (KETLLLKGAERKK). The chain crosses the membrane as a helical span at residues 267 to 287 (MIVAAILMLQATVFFVLYNQM). The Cytoplasmic portion of the chain corresponds to 288–312 (PLSLNFFAIHNTEHMLFGIPVQPEQ). Residues 313 to 333 (FQSLNPFWIMLASPLLALCYN) form a helical membrane-spanning segment. Over 334-344 (KLGNRLPMPHK) the chain is Periplasmic. A helical membrane pass occupies residues 345-365 (FAIGMVLCAGAFLVLPLGAKY). Over 366–375 (ANAQGLVSSN) the chain is Cytoplasmic. A helical membrane pass occupies residues 376–396 (WMVLSYLLQSVGELLISGLGL). Topologically, residues 397-409 (AMVAQLVPQRLMG) are periplasmic. The chain crosses the membrane as a helical span at residues 410–430 (FIMGAWFLTSAASSVIAGWVA). The Cytoplasmic segment spans residues 431–451 (GLTAAPDNVTNPLATLEIYSR). A helical membrane pass occupies residues 452–472 (VFTQIGVVTGVIAVVTIIIAP). At 473–495 (WLHRMTLDEKPAHPEHEMALDAR) the chain is on the periplasmic side.

This sequence belongs to the major facilitator superfamily. Proton-dependent oligopeptide transporter (POT/PTR) (TC 2.A.17) family. DtpA subfamily.

The protein localises to the cell inner membrane. Proton-dependent permease that transports di- and tripeptides. The protein is Dipeptide and tripeptide permease A of Chromobacterium violaceum (strain ATCC 12472 / DSM 30191 / JCM 1249 / CCUG 213 / NBRC 12614 / NCIMB 9131 / NCTC 9757 / MK).